A 425-amino-acid polypeptide reads, in one-letter code: Trigger factor (425 aa).

The PPIase FKBP-type domain maps to 158 to 231 (GDLVRVNMEV…VEEVYKRTLP (74 aa)).

Belongs to the FKBP-type PPIase family. Tig subfamily.

The protein resides in the cytoplasm. The enzyme catalyses [protein]-peptidylproline (omega=180) = [protein]-peptidylproline (omega=0). Functionally, involved in protein export. Acts as a chaperone by maintaining the newly synthesized protein in an open conformation. Functions as a peptidyl-prolyl cis-trans isomerase. This Thermotoga maritima (strain ATCC 43589 / DSM 3109 / JCM 10099 / NBRC 100826 / MSB8) protein is Trigger factor (tig).